Consider the following 1514-residue polypeptide: Helicase SWR1 (1514 aa).

Positions 339–411 (ISYFYKQQDL…EERHKKSLAR (73 aa)) constitute an HSA domain. Residues 465-480 (QVNDDGRSSTPSSDSN) show a composition bias toward polar residues. Disordered stretches follow at residues 465 to 524 (QVND…PTDE) and 538 to 641 (FNGS…KDQV). The segment covering 484-508 (SESDDDMDDELSTSSDEDEEVDADV) has biased composition (acidic residues). Over residues 513 to 524 (SPASTEATPTDE) the composition is skewed to polar residues. Residues 547–563 (SRNKDEKFPTLDKHESS) are compositionally biased toward basic and acidic residues. Low complexity predominate over residues 564–586 (SSESSVMTGEESSIYSSSENESQ). A compositionally biased stretch (basic and acidic residues) spans 588–597 (ENDRESDDKT). The segment covering 612 to 623 (SDGDLDLDDSED) has biased composition (acidic residues). The Helicase ATP-binding domain occupies 708–873 (ASLYNNHTNG…WSLLYFLMPQ (166 aa)). ATP is bound at residue 721–728 (DEMGLGKT). The DEAH box motif lies at 824–827 (DEAH). Positions 1247-1400 (KLQKLAILLQ…NVVIQEGDFT (154 aa)) constitute a Helicase C-terminal domain. The segment at 1469 to 1490 (NDDFDESTEKKAANEEEENHAE) is disordered. A compositionally biased stretch (basic and acidic residues) spans 1475 to 1490 (STEKKAANEEEENHAE).

The protein belongs to the SNF2/RAD54 helicase family. SWR1 subfamily. In terms of assembly, component of the SWR1 chromatin-remodeling complex composed of at least ACT1, ARP4, RVB1, RVB2, ARP6, YAF9, VPS71, VPS72, SWC3, SWC4, SWC5, SWC7 and SWR1, and perhaps BDF1.

The protein resides in the nucleus. The catalysed reaction is ATP + H2O = ADP + phosphate + H(+). Functionally, catalytic component of the SWR1 complex which mediates the ATP-dependent exchange of histone H2A for the H2A variant HZT1 leading to transcriptional regulation of selected genes by chromatin remodeling. In Saccharomyces cerevisiae (strain ATCC 204508 / S288c) (Baker's yeast), this protein is Helicase SWR1 (SWR1).